The sequence spans 194 residues: MKIWTSEHVFDHPWETVTTAAMQKYPNPMNPSVVGVDVLDRHIDASGKLHSHRLLSTEWGLPSIVKSIIGAARTKTYVQEHSVVDPVAKTMELKSTNISFTNMVSVDERLIYKPHPQDSEKTVLTQEAIITVKGVSLGSYLEGLMASTISSNANKGREAMEWVIHKLNAEIEELTASARGSIRTPMAAAAFVEK.

One can recognise a PRELI/MSF1 domain in the interval 1–172; that stretch reads MKIWTSEHVF…VIHKLNAEIE (172 aa). 2 positions are modified to phosphoserine: S46 and S51.

This sequence belongs to the slowmo family.

The chain is PRELI domain containing protein 3B (PRELID3B) from Sus scrofa (Pig).